A 278-amino-acid polypeptide reads, in one-letter code: Orotidine 5'-phosphate decarboxylase (278 aa).

The Proton donor role is filled by lysine 96.

The protein belongs to the OMP decarboxylase family. Type 2 subfamily.

The enzyme catalyses orotidine 5'-phosphate + H(+) = UMP + CO2. The protein operates within pyrimidine metabolism; UMP biosynthesis via de novo pathway; UMP from orotate: step 2/2. In Salinispora arenicola (strain CNS-205), this protein is Orotidine 5'-phosphate decarboxylase.